The chain runs to 722 residues: Polyribonucleotide nucleotidyltransferase (722 aa).

Mg(2+) contacts are provided by Asp-498 and Asp-504. The region spanning 565-624 (PQFHTMKIDPDKIRDIIGKGGATIRSITEETGASIDIDDNGTIKIYADDGDGMQAAIARI) is the KH domain. The region spanning 634–702 (GAVYQGKVVR…QRGRIKLSIK (69 aa)) is the S1 motif domain.

Belongs to the polyribonucleotide nucleotidyltransferase family. Component of the RNA degradosome, which is a multiprotein complex involved in RNA processing and mRNA degradation. Mg(2+) is required as a cofactor.

The protein localises to the cytoplasm. It carries out the reaction RNA(n+1) + phosphate = RNA(n) + a ribonucleoside 5'-diphosphate. Its function is as follows. Involved in mRNA degradation. Catalyzes the phosphorolysis of single-stranded polyribonucleotides processively in the 3'- to 5'-direction. This Saccharophagus degradans (strain 2-40 / ATCC 43961 / DSM 17024) protein is Polyribonucleotide nucleotidyltransferase.